The following is a 496-amino-acid chain: Apulose kinase (496 aa).

Residues 13-15 (TTN), T267, G308, and 408-412 (GATQN) each bind ATP.

The protein belongs to the FGGY kinase family.

The enzyme catalyses apulose + ATP = apulose 4-phosphate + ADP + H(+). Its pathway is carbohydrate metabolism. Involved in catabolism of D-apiose. Catalyzes phosphorylation of apulose to form apulose 4-phosphate. This chain is Apulose kinase, found in Pectobacterium atrosepticum (strain SCRI 1043 / ATCC BAA-672) (Erwinia carotovora subsp. atroseptica).